Consider the following 652-residue polypeptide: Phosphomethylpyrimidine synthase (652 aa).

Disordered regions lie at residues 1-45 (MVSR…SVSA) and 118-166 (QRGD…LDGR). A compositionally biased stretch (low complexity) spans 8-45 (SSSSTSKAVTSSPSTSSLSSAASSPSVSSSSSSSSVSA). The span at 134-162 (GASGPGTLGSGTPGSGTPGSGPLGLGGTD) shows a compositional bias: gly residues. Substrate-binding positions include asparagine 245, methionine 274, tyrosine 303, histidine 339, 359–361 (SRG), 400–403 (DGLR), and glutamate 439. Histidine 443 is a Zn(2+) binding site. Tyrosine 466 contributes to the substrate binding site. Histidine 507 serves as a coordination point for Zn(2+). [4Fe-4S] cluster-binding residues include cysteine 587, cysteine 590, and cysteine 595.

It belongs to the ThiC family. [4Fe-4S] cluster is required as a cofactor.

It catalyses the reaction 5-amino-1-(5-phospho-beta-D-ribosyl)imidazole + S-adenosyl-L-methionine = 4-amino-2-methyl-5-(phosphooxymethyl)pyrimidine + CO + 5'-deoxyadenosine + formate + L-methionine + 3 H(+). Its pathway is cofactor biosynthesis; thiamine diphosphate biosynthesis. In terms of biological role, catalyzes the synthesis of the hydroxymethylpyrimidine phosphate (HMP-P) moiety of thiamine from aminoimidazole ribotide (AIR) in a radical S-adenosyl-L-methionine (SAM)-dependent reaction. This chain is Phosphomethylpyrimidine synthase, found in Frankia casuarinae (strain DSM 45818 / CECT 9043 / HFP020203 / CcI3).